The sequence spans 159 residues: Transcriptional repressor NrdR (159 aa).

The segment at 1–26 (MRCPFCAHDNSQVKDSRPSEDNTSIR) is disordered. The segment at 3–34 (CPFCAHDNSQVKDSRPSEDNTSIRRRRQCEGC) is a zinc-finger region. The span at 11-24 (SQVKDSRPSEDNTS) shows a compositional bias: basic and acidic residues. The region spanning 49-139 (VVVVKSGERR…VYRDFTEARD (91 aa)) is the ATP-cone domain.

The protein belongs to the NrdR family. It depends on Zn(2+) as a cofactor.

In terms of biological role, negatively regulates transcription of bacterial ribonucleotide reductase nrd genes and operons by binding to NrdR-boxes. This Novosphingobium aromaticivorans (strain ATCC 700278 / DSM 12444 / CCUG 56034 / CIP 105152 / NBRC 16084 / F199) protein is Transcriptional repressor NrdR.